We begin with the raw amino-acid sequence, 278 residues long: 4-deoxy-L-threo-5-hexosulose-uronate ketol-isomerase (278 aa).

Zn(2+) contacts are provided by histidine 196, histidine 198, glutamate 203, and histidine 245.

This sequence belongs to the KduI family. Homohexamer. It depends on Zn(2+) as a cofactor.

It catalyses the reaction 5-dehydro-4-deoxy-D-glucuronate = 3-deoxy-D-glycero-2,5-hexodiulosonate. Its pathway is glycan metabolism; pectin degradation; 2-dehydro-3-deoxy-D-gluconate from pectin: step 4/5. Functionally, catalyzes the isomerization of 5-dehydro-4-deoxy-D-glucuronate to 3-deoxy-D-glycero-2,5-hexodiulosonate. In Escherichia coli (strain UTI89 / UPEC), this protein is 4-deoxy-L-threo-5-hexosulose-uronate ketol-isomerase.